The chain runs to 424 residues: UDP-N-acetylglucosamine 1-carboxyvinyltransferase (424 aa).

22–23 contacts phosphoenolpyruvate; it reads KN. Position 93 (R93) interacts with UDP-N-acetyl-alpha-D-glucosamine. C117 (proton donor) is an active-site residue. C117 carries the 2-(S-cysteinyl)pyruvic acid O-phosphothioketal modification. Residues 162–165, D307, and I329 each bind UDP-N-acetyl-alpha-D-glucosamine; that span reads KVSV.

It belongs to the EPSP synthase family. MurA subfamily.

The protein localises to the cytoplasm. The enzyme catalyses phosphoenolpyruvate + UDP-N-acetyl-alpha-D-glucosamine = UDP-N-acetyl-3-O-(1-carboxyvinyl)-alpha-D-glucosamine + phosphate. It functions in the pathway cell wall biogenesis; peptidoglycan biosynthesis. Functionally, cell wall formation. Adds enolpyruvyl to UDP-N-acetylglucosamine. The protein is UDP-N-acetylglucosamine 1-carboxyvinyltransferase of Glaesserella parasuis serovar 5 (strain SH0165) (Haemophilus parasuis).